The following is a 566-amino-acid chain: MSAPIISFKNFSFQYNSQTEPTLRDINLDIYPGEKVLIAGPSGSGKSTLGRCLNGLIPQSYPGTVTGQARIAGQTITESSIFALSQDVGTVLQDPDSQFVGLTVVEDMAFSLENDQQTQPAMRQATEQWAQTLDLQDLLTHRPQELSGGQKQRVAMAGVLIDNSKILLFDEPLASLDPASGKASMALIDQLTHTQDLTVIIIEHRIEDVLQQPIDRLIVMQDGAIVANDRPETILRQSLMTQLGLREPLYLSALKLAGVDLATCQHLDNLQALQVPDLTATLQNWTTGVQLQSPTVHDQPLLAIEHLTFGYDPAKPIINDITVTLHQGEMISLVGQNGTGKSTLSNLITGFLMPQSGKMRFNGHSLADQSVKERADQIGYILQDPNQMISTTMIFDEVAAGLVLRGVADDEVKRRVQAVLKVCGLYEFRHWPISALSFGQKKRVTIAAILVLEPAMLILDEPTAGQDLQHYTEMMTFLTKINQEQHMTIMLITHDMHLMLEYTDRTIVLGHGNILMDARPADVLTNASIIQQASLAKTSLYTLAEAHHLNPTEFVAKFVQAEREAR.

ABC transporter domains are found at residues 6–247 (ISFK…GLRE) and 302–536 (LAIE…ASLA). Residues 40 to 47 (GPSGSGKS) and 335 to 342 (GQNGTGKS) each bind ATP.

Belongs to the ABC transporter superfamily.

The protein localises to the cell membrane. Functionally, probably part of an ABC transporter complex. Responsible for energy coupling to the transport system. The sequence is that of Putative ABC transporter ATP-binding protein lp_0149 from Lactiplantibacillus plantarum (strain ATCC BAA-793 / NCIMB 8826 / WCFS1) (Lactobacillus plantarum).